The sequence spans 398 residues: S-adenosylmethionine synthase (398 aa).

His-17 serves as a coordination point for ATP. Asp-19 contributes to the Mg(2+) binding site. Residue Glu-45 coordinates K(+). Glu-58 and Gln-101 together coordinate L-methionine. The tract at residues 101 to 111 (QSPDIAQGVDK) is flexible loop. ATP contacts are provided by residues 176–178 (DGK), 243–244 (RF), Asp-252, 258–259 (RK), and Lys-279. Asp-252 is a binding site for L-methionine. Residue Lys-283 participates in L-methionine binding.

It belongs to the AdoMet synthase family. As to quaternary structure, homotetramer; dimer of dimers. Mg(2+) serves as cofactor. Requires K(+) as cofactor.

Its subcellular location is the cytoplasm. The enzyme catalyses L-methionine + ATP + H2O = S-adenosyl-L-methionine + phosphate + diphosphate. It participates in amino-acid biosynthesis; S-adenosyl-L-methionine biosynthesis; S-adenosyl-L-methionine from L-methionine: step 1/1. Functionally, catalyzes the formation of S-adenosylmethionine (AdoMet) from methionine and ATP. The overall synthetic reaction is composed of two sequential steps, AdoMet formation and the subsequent tripolyphosphate hydrolysis which occurs prior to release of AdoMet from the enzyme. The chain is S-adenosylmethionine synthase from Staphylococcus aureus (strain Mu3 / ATCC 700698).